A 332-amino-acid polypeptide reads, in one-letter code: Formamidase (332 aa).

A CN hydrolase domain is found at 14–259; it reads FLTALIQYPV…WEIVTAEVYP (246 aa). Residue Glu-60 is the Proton acceptor of the active site. The active-site Proton donor is Lys-132. The Nucleophile role is filled by Cys-165.

It belongs to the carbon-nitrogen hydrolase superfamily. Aliphatic amidase family.

It catalyses the reaction formamide + H2O = formate + NH4(+). Its function is as follows. Is an aliphatic amidase with a restricted substrate specificity, as it only hydrolyzes formamide. The chain is Formamidase from Bacillus thuringiensis (strain Al Hakam).